The sequence spans 361 residues: tRNA N6-adenosine threonylcarbamoyltransferase (361 aa).

2 residues coordinate Fe cation: H110 and H114. Residues 132–136 (LVSGG), D165, G178, D182, and N284 each bind substrate. D312 contributes to the Fe cation binding site.

The protein belongs to the KAE1 / TsaD family. Requires Fe(2+) as cofactor.

The protein localises to the cytoplasm. It carries out the reaction L-threonylcarbamoyladenylate + adenosine(37) in tRNA = N(6)-L-threonylcarbamoyladenosine(37) in tRNA + AMP + H(+). In terms of biological role, required for the formation of a threonylcarbamoyl group on adenosine at position 37 (t(6)A37) in tRNAs that read codons beginning with adenine. Is involved in the transfer of the threonylcarbamoyl moiety of threonylcarbamoyl-AMP (TC-AMP) to the N6 group of A37, together with TsaE and TsaB. TsaD likely plays a direct catalytic role in this reaction. The chain is tRNA N6-adenosine threonylcarbamoyltransferase from Desulfovibrio desulfuricans (strain ATCC 27774 / DSM 6949 / MB).